Consider the following 477-residue polypeptide: Protein AC142 (477 aa).

It is found in the host cytoplasm. The protein resides in the host nucleus. It localises to the virion. In terms of biological role, required for occlusion-derived virus (ODV) envelopment and subsequent embedding of virions into polyhedra. The protein is Protein AC142 (ORF142) of Autographa californica nuclear polyhedrosis virus (AcMNPV).